A 443-amino-acid chain; its full sequence is MSAMTPREIVHELNKHIVGQEEAKRAVAIALRNRWRRMQLDSSLRDEITPKNILMIGPTGVGKTEIARRLAKLADAPFLKVEATKFTEVGYVGRDVESIIRDLADMAVKMLREQEMKRHEHRALDAAEDRILDALLPPPRDFNEDSQRTNADSSTRQLFRKKLREGELDDKEIEIDLRSSGAGVEIMAPPGMEEMTSQLQSMFSNLSSDKRKTRKMKVADAMKRVKDEEAAKLVNEEEIKQKAIQAVEQNGIVFIDEIDKVAKRSENTSSDVSREGVQRDLLPLIEGSTVSTKYGSIRTDHILFIASGAFHLSKPSDLIPELQGRLPIRVELQALTPDDFKRILTEPDASLVQQYEALMGTEGVKLTFADDAIARIAEVAYKVNETTENIGARRLHTVLERLLESLSYDAGDQVTDTFEVTADYVDEKLGELSEDEDLSRYIL.

Residues valine 18 and 60–65 each bind ATP; that span reads GVGKTE. Positions 136-158 are disordered; the sequence is LPPPRDFNEDSQRTNADSSTRQL. Residues 148-157 show a composition bias toward polar residues; it reads RTNADSSTRQ. Residues aspartate 256, glutamate 321, and arginine 393 each coordinate ATP.

Belongs to the ClpX chaperone family. HslU subfamily. As to quaternary structure, a double ring-shaped homohexamer of HslV is capped on each side by a ring-shaped HslU homohexamer. The assembly of the HslU/HslV complex is dependent on binding of ATP.

The protein localises to the cytoplasm. Functionally, ATPase subunit of a proteasome-like degradation complex; this subunit has chaperone activity. The binding of ATP and its subsequent hydrolysis by HslU are essential for unfolding of protein substrates subsequently hydrolyzed by HslV. HslU recognizes the N-terminal part of its protein substrates and unfolds these before they are guided to HslV for hydrolysis. This Marinobacter nauticus (strain ATCC 700491 / DSM 11845 / VT8) (Marinobacter aquaeolei) protein is ATP-dependent protease ATPase subunit HslU.